The following is a 697-amino-acid chain: Phenoloxidase 1 (697 aa).

Positions 1-101 are cleaved as a propeptide — removed by PPAE1; the sequence is MSDMSGDVVE…PKHQEMATEV (101 aa). Cu cation-binding residues include His217, His221, and His247. N-linked (GlcNAc...) asparagine glycosylation is found at Asn260 and Asn313. The Proton acceptor role is filled by Glu355. The Cu cation site is built by His370, His374, and His410. Residues Asn498 and Asn552 are each glycosylated (N-linked (GlcNAc...) asparagine). 2 cysteine pairs are disulfide-bonded: Cys587-Cys631 and Cys589-Cys638.

The protein belongs to the tyrosinase family. In terms of assembly, heterodimer. Cu(2+) is required as a cofactor. Post-translationally, activated by the cleavage of the N-terminal propeptide by PPAE1. As to expression, expressed in hemocytes.

Its subcellular location is the secreted. The catalysed reaction is L-tyrosine + O2 = L-dopaquinone + H2O. It catalyses the reaction 2 L-dopa + O2 = 2 L-dopaquinone + 2 H2O. Its activity is regulated as follows. Activated by a cationic detergent cetyl pyridinium chloride (CPC). Inhibited by phenyl thio-urea (PTU). In terms of biological role, this is a copper-containing oxidase that functions in the formation of pigments such as melanins and other polyphenolic compounds. Catalyzes the rate-limiting conversions of tyrosine to DOPA, DOPA to DOPA-quinone and possibly 5,6 dihydroxyindole to indole-5'6 quinone. Catalyzes the oxidation of 4-methylcatechol. Binds to the surface of hemocytes and is involved in hemocyte melanization. This Spodoptera litura (Asian cotton leafworm) protein is Phenoloxidase 1.